We begin with the raw amino-acid sequence, 392 residues long: Chaperone protein DnaJ (392 aa).

In terms of domain architecture, J spans 2 to 67; the sequence is DYYSILGISK…QKRDSYDRFG (66 aa). A CR-type zinc finger spans residues 148-226; that stretch reads GVEKELVVSG…CRGQGRVKDK (79 aa). Zn(2+)-binding residues include Cys161, Cys164, Cys178, Cys181, Cys200, Cys203, Cys214, and Cys217. 4 CXXCXGXG motif repeats span residues 161–168, 178–185, 200–207, and 214–221; these read CETCSGQG, CERCKGSG, CPECGGEG, and CSSCRGQG.

It belongs to the DnaJ family. In terms of assembly, homodimer. Zn(2+) serves as cofactor.

It is found in the cytoplasm. In terms of biological role, participates actively in the response to hyperosmotic and heat shock by preventing the aggregation of stress-denatured proteins and by disaggregating proteins, also in an autonomous, DnaK-independent fashion. Unfolded proteins bind initially to DnaJ; upon interaction with the DnaJ-bound protein, DnaK hydrolyzes its bound ATP, resulting in the formation of a stable complex. GrpE releases ADP from DnaK; ATP binding to DnaK triggers the release of the substrate protein, thus completing the reaction cycle. Several rounds of ATP-dependent interactions between DnaJ, DnaK and GrpE are required for fully efficient folding. Also involved, together with DnaK and GrpE, in the DNA replication of plasmids through activation of initiation proteins. The polypeptide is Chaperone protein DnaJ (Chlamydia pneumoniae (Chlamydophila pneumoniae)).